Here is a 278-residue protein sequence, read N- to C-terminus: Ras-related protein Rab-40B (278 aa).

3 residues coordinate GTP: S23, G26, and K27. The switch-I stretch occupies residues 41–49; that stretch reads SPYGHPAGI. D69 contributes to the Mg(2+) binding site. GTP is bound by residues G72, N126, and R127. The interval 72–88 is switch-II; sequence GQGRFCTIFRSYSRGAQ. The SOCS box domain occupies 175 to 228; sequence LLRHGMDRLWRPSKVLSLQELCCRAVVSCTPGHLVDKLPLPVALRSHLKSFSMA. Residues 245–278 are disordered; the sequence is ANSSHKRNSFRKVRTIRPPQSPPRNCARNSCKIS. Positions 248–259 are enriched in basic residues; that stretch reads SHKRNSFRKVRT. C270 is lipidated: S-palmitoyl cysteine. C275 carries S-geranylgeranyl cysteine lipidation.

The protein belongs to the small GTPase superfamily. Rab family. Component of the cullin-5-RING E3 ubiquitin-protein ligase complex (ECS(RAB40B) complex) composed of CUL5, Elongin BC (ELOB and ELOC), RNF7/RBX2 and RAB40B; RAB40B interaction with ECS complex is GTP-independent. Binds (GTP-bound) LIMA1; interaction promotes LIMA1 subcellular localization in lamellipodia during cell migration. Interacts (GTP-bound) with TKS5/SH3PXD2A (via PX domain); interaction promotes invadopodia-mediated extracellular matrix degradation. Mg(2+) is required as a cofactor.

The protein resides in the cell membrane. Its subcellular location is the cytoplasm. It localises to the cytosol. The protein localises to the cell projection. It is found in the lamellipodium membrane. The protein resides in the ruffle. The enzyme catalyses GTP + H2O = GDP + phosphate + H(+). The protein operates within protein modification; protein ubiquitination. Regulated by guanine nucleotide exchange factors (GEFs) which promote the exchange of bound GDP for free GTP. Regulated by GTPase activating proteins (GAPs) which increase the GTP hydrolysis activity. Inhibited by GDP dissociation inhibitors (GDIs). RAB40B small GTPase acts as substrate-recognition components of the ECS(RAB40B) E3 ubiquitin ligase complex which mediates the ubiquitination of target proteins. The Rab40 subfamily belongs to the Rab family that are key regulators of intracellular membrane trafficking, from the formation of transport vesicles to their fusion with membranes. Rabs cycle between an inactive GDP-bound form and an active GTP-bound form that is able to recruit to membranes different sets of downstream effectors directly responsible for vesicle formation, movement, tethering and fusion. As part of the ECS(RAB40B) complex, GTP-bound RAB40B promotes LIMA1/EPLIN ubiquitination and degradation, thereby regulating leading-edge actin dynamics during cell migration. As part of the ECS(RAB40B) complex, GTP-bound RAB40B also ubiquitinates RAP2A GTPase which promotes its localization to lamellipodia and activation to drive cell migration. The ECS(RAB40B) complex does not mediate canonical ubiquitin-dependent degradation of RAP2. RAB40B also binds TKS5/SH3PXD2A effector independently from ECS complex to promote invadopodia-mediated extracellular matrix degradation. The sequence is that of Ras-related protein Rab-40B from Mus musculus (Mouse).